We begin with the raw amino-acid sequence, 757 residues long: Ecdysone receptor (757 aa).

A modulating region spans residues 1 to 300; sequence MMKRRWSNNG…GPAPRLQEEL (300 aa). 2 disordered regions span residues 126–192 and 235–289; these read NSVG…GGGG and LNHH…KKIK. The span at 128 to 138 shows a compositional bias: gly residues; that stretch reads VGGGGGGGGVP. The segment covering 167–183 has biased composition (low complexity); it reads NSNSNHSNSSSHHTNGH. 2 consecutive NR C4-type zinc fingers follow at residues 301-321 and 337-361; these read CLVC…CEGC and CKFG…LKKC. The nuclear receptor DNA-binding region spans 301–373; the sequence is CLVCGDRASG…VGMRPECVVP (73 aa). One can recognise an NR LBD domain in the interval 442 to 677; that stretch reads NQLAVIYKLI…FLEEIWDVHA (236 aa). Low complexity predominate over residues 717–734; sequence TSMATSSSSSLSPSAAST. Residues 717–739 form a disordered region; that stretch reads TSMATSSSSSLSPSAASTPNGGA.

The protein belongs to the nuclear hormone receptor family. NR1 subfamily.

The protein localises to the nucleus. Receptor for ecdysone. Binds to ecdysone response elements (ECRES). The chain is Ecdysone receptor (EcR) from Lucilia cuprina (Green bottle fly).